A 155-amino-acid chain; its full sequence is Cytochrome c-type biogenesis protein CcmE (155 aa).

Residues 1 to 8 are Cytoplasmic-facing; the sequence is MNPIRKKR. A helical; Signal-anchor for type II membrane protein membrane pass occupies residues 9–29; sequence LYWILALLCGVSIAMALALSA. Residues 30-155 lie on the Periplasmic side of the membrane; sequence LQENINLFYT…PKRVKQESTR (126 aa). The heme site is built by histidine 124 and tyrosine 128.

Belongs to the CcmE/CycJ family.

Its subcellular location is the cell inner membrane. In terms of biological role, heme chaperone required for the biogenesis of c-type cytochromes. Transiently binds heme delivered by CcmC and transfers the heme to apo-cytochromes in a process facilitated by CcmF and CcmH. The protein is Cytochrome c-type biogenesis protein CcmE of Janthinobacterium sp. (strain Marseille) (Minibacterium massiliensis).